Consider the following 348-residue polypeptide: Mannonate dehydratase (348 aa).

This sequence belongs to the mannonate dehydratase family. Fe(2+) serves as cofactor. The cofactor is Mn(2+).

It catalyses the reaction D-mannonate = 2-dehydro-3-deoxy-D-gluconate + H2O. It functions in the pathway carbohydrate metabolism; pentose and glucuronate interconversion. Functionally, catalyzes the dehydration of D-mannonate. This Streptococcus agalactiae serotype Ia (strain ATCC 27591 / A909 / CDC SS700) protein is Mannonate dehydratase.